A 378-amino-acid polypeptide reads, in one-letter code: Chaperone protein DnaJ (378 aa).

Positions 6–70 (DYYDVLGVSR…QKRQQYDQFG (65 aa)) constitute a J domain. The segment at 137-219 (GKTSEISYSR…CHGKGVKTQK (83 aa)) adopts a CR-type zinc-finger fold. Zn(2+)-binding residues include Cys-150, Cys-153, Cys-167, Cys-170, Cys-193, Cys-196, Cys-207, and Cys-210. CXXCXGXG motif repeat units follow at residues 150–157 (CEVCKGSG), 167–174 (CDKCGGSG), 193–200 (CDKCAGSG), and 207–214 (CHNCHGKG).

The protein belongs to the DnaJ family. As to quaternary structure, homodimer. It depends on Zn(2+) as a cofactor.

It is found in the cytoplasm. Participates actively in the response to hyperosmotic and heat shock by preventing the aggregation of stress-denatured proteins and by disaggregating proteins, also in an autonomous, DnaK-independent fashion. Unfolded proteins bind initially to DnaJ; upon interaction with the DnaJ-bound protein, DnaK hydrolyzes its bound ATP, resulting in the formation of a stable complex. GrpE releases ADP from DnaK; ATP binding to DnaK triggers the release of the substrate protein, thus completing the reaction cycle. Several rounds of ATP-dependent interactions between DnaJ, DnaK and GrpE are required for fully efficient folding. Also involved, together with DnaK and GrpE, in the DNA replication of plasmids through activation of initiation proteins. This Lactobacillus delbrueckii subsp. bulgaricus (strain ATCC BAA-365 / Lb-18) protein is Chaperone protein DnaJ.